Reading from the N-terminus, the 154-residue chain is Endoribonuclease YbeY (154 aa).

The Zn(2+) site is built by H114, H118, and H124.

Belongs to the endoribonuclease YbeY family. It depends on Zn(2+) as a cofactor.

It localises to the cytoplasm. In terms of biological role, single strand-specific metallo-endoribonuclease involved in late-stage 70S ribosome quality control and in maturation of the 3' terminus of the 16S rRNA. This is Endoribonuclease YbeY from Aggregatibacter actinomycetemcomitans (Actinobacillus actinomycetemcomitans).